The primary structure comprises 234 residues: uncharacterized protein (234 aa).

Disordered stretches follow at residues 1 to 65 and 182 to 234; these read MTSV…RRGP and ARGA…GRKT.

This is an uncharacterized protein from Homo sapiens (Human).